Consider the following 122-residue polypeptide: MIQNESYLVAADNSGAKVLRVIRVLGGSHKQFGTIGDIVVCSVREAVPNTDIKKGDVVKAVVVRTKKEIRRPDGSYIRFDDNAAVVLDKFNQPKGTRVFGPVARELREKGFMKIVSLAPEVW.

This sequence belongs to the universal ribosomal protein uL14 family. As to quaternary structure, part of the 50S ribosomal subunit. Forms a cluster with proteins L3 and L19. In the 70S ribosome, L14 and L19 interact and together make contacts with the 16S rRNA in bridges B5 and B8.

Binds to 23S rRNA. Forms part of two intersubunit bridges in the 70S ribosome. The polypeptide is Large ribosomal subunit protein uL14 (Fervidobacterium nodosum (strain ATCC 35602 / DSM 5306 / Rt17-B1)).